The primary structure comprises 89 residues: Cytochrome c oxidase subunit 7A, mitochondrial (89 aa).

Residues 1-31 constitute a mitochondrion transit peptide; it reads MMNLSRAVVRSFATTAGRRSAAVPKDQIEKG. At 32 to 58 the chain is on the mitochondrial matrix side; sequence YFEIRKVQEHFQKKDGKPVFLKGSVVD. The helical transmembrane segment at 59–81 threads the bilayer; sequence NVLYRVTVALALVGIGGMGKLFY. Over 82 to 89 the chain is Mitochondrial intermembrane; it reads ELSVPKKE.

The protein belongs to the cytochrome c oxidase VIIa family. Component of the cytochrome c oxidase (complex IV, CIV), a multisubunit enzyme composed of a catalytic core of 3 subunits and several supernumerary subunits. The complex exists as a monomer or a dimer and forms supercomplexes (SCs) in the inner mitochondrial membrane with ubiquinol-cytochrome c oxidoreductase (cytochrome b-c1 complex, complex III, CIII).

It localises to the mitochondrion inner membrane. The protein operates within energy metabolism; oxidative phosphorylation. Its function is as follows. Component of the cytochrome c oxidase, the last enzyme in the mitochondrial electron transport chain which drives oxidative phosphorylation. The respiratory chain contains 3 multisubunit complexes succinate dehydrogenase (complex II, CII), ubiquinol-cytochrome c oxidoreductase (cytochrome b-c1 complex, complex III, CIII) and cytochrome c oxidase (complex IV, CIV), that cooperate to transfer electrons derived from NADH and succinate to molecular oxygen, creating an electrochemical gradient over the inner membrane that drives transmembrane transport and the ATP synthase. Cytochrome c oxidase is the component of the respiratory chain that catalyzes the reduction of oxygen to water. Electrons originating from reduced cytochrome c in the intermembrane space (IMS) are transferred via the dinuclear copper A center (CU(A)) of subunit 2 and heme A of subunit 1 to the active site in subunit 1, a binuclear center (BNC) formed by heme A3 and copper B (CU(B)). The BNC reduces molecular oxygen to 2 water molecules using 4 electrons from cytochrome c in the IMS and 4 protons from the mitochondrial matrix. The polypeptide is Cytochrome c oxidase subunit 7A, mitochondrial (Drosophila melanogaster (Fruit fly)).